The following is an 888-amino-acid chain: 3-hydroxy-3-methylglutaryl-coenzyme A reductase (888 aa).

Residues 1-9 (MLSRLFRMH) are Cytoplasmic-facing. Residues 10-39 (GLFVASHPWEVIVGTVTLTICMMSMNMFTG) form a helical membrane-spanning segment. Residues 40–56 (NDKICGWNYECPKFEED) are Lumenal-facing. Residues 57–78 (VLSSDIIILTITRCIAILYIYF) traverse the membrane as a helical segment. One can recognise an SSD domain in the interval 61 to 218 (DIIILTITRC…MTFFPACVSL (158 aa)). Positions 75 to 78 (YIYF) match the INSIG-binding motif motif. Residues 79–89 (QFQNLRQLGSK) lie on the Cytoplasmic side of the membrane. Residue lysine 89 forms a Glycyl lysine isopeptide (Lys-Gly) (interchain with G-Cter in ubiquitin) linkage. The helical transmembrane segment at 90-114 (YILGIAGLFTIFSSFVFSTVVIHFL) threads the bilayer. Topologically, residues 115–123 (DKELTGLNE) are lumenal. Residues 124 to 149 (ALPFFLLLIDLSRASALAKFALSSNS) traverse the membrane as a helical segment. The Cytoplasmic portion of the chain corresponds to 150–159 (QDEVRENIAR). Residues 160–187 (GMAILGPTFTLDALVECLVIGVGTMSGV) traverse the membrane as a helical segment. At 188-191 (RQLE) the chain is on the lumenal side. Residues 192–220 (IMCCFGCMSVLANYFVFMTFFPACVSLVL) traverse the membrane as a helical segment. Over 221-248 (ELSRESREGRPIWQLSHFARVLEEEENK) the chain is Cytoplasmic. Lysine 248 participates in a covalent cross-link: Glycyl lysine isopeptide (Lys-Gly) (interchain with G-Cter in ubiquitin). The chain crosses the membrane as a helical span at residues 249 to 275 (PNPVTQRVKMIMSLGLVLVHAHSRWIA). Over 276 to 314 (DPSPQNSTADNSKVSLGLDENVSKRIEPSVSLWQFYLSK) the chain is Lumenal. 2 N-linked (GlcNAc...) asparagine glycosylation sites follow: asparagine 281 and asparagine 296. Residues 315 to 339 (MISMDIEQVITLSLALLLAVKYIFF) form a helical membrane-spanning segment. Topologically, residues 340–888 (EQAETESTLS…LEGACTKKAA (549 aa)) are cytoplasmic. Catalysis depends on charge relay system residues glutamate 559, lysine 691, and aspartate 767. Histidine 866 acts as the Proton donor in catalysis. Serine 872 carries the post-translational modification Phosphoserine; by AMPK.

Belongs to the HMG-CoA reductase family. In terms of assembly, homotetramer. Homodimer. Interacts (via its SSD) with INSIG1; the interaction, accelerated by sterols, leads to the recruitment of HMGCR to AMFR/gp78 for its ubiquitination by the sterol-mediated ERAD pathway. Interacts with UBIAD1. Post-translationally, undergoes sterol-mediated ubiquitination and ER-associated degradation (ERAD). Accumulation of sterols in the endoplasmic reticulum (ER) membrane, triggers binding of the reductase to the ER membrane protein INSIG1 or INSIG2. The INSIG1 binding leads to the recruitment of the ubiquitin ligase, AMFR/gp78, RNF139 or RNF145, initiating ubiquitination of the reductase. The ubiquitinated reductase is then extracted from the ER membrane and delivered to cytosolic 26S proteosomes by a mechanism probably mediated by the ATPase Valosin-containing protein VCP/p97. The INSIG2-binding leads to the recruitment of the ubiquitin ligase RNF139, initiating ubiquitination of the reductase. Lys-248 is the main site of ubiquitination. Ubiquitination is enhanced by the presence of a geranylgeranylated protein. N-glycosylated. Deglycosylated by NGLY1 on release from the endoplasmic reticulum (ER) in a sterol-mediated manner. In terms of processing, phosphorylated. Phosphorylation at Ser-872 reduces the catalytic activity.

The protein resides in the endoplasmic reticulum membrane. It is found in the peroxisome membrane. It carries out the reaction (R)-mevalonate + 2 NADP(+) + CoA = (3S)-3-hydroxy-3-methylglutaryl-CoA + 2 NADPH + 2 H(+). It functions in the pathway metabolic intermediate biosynthesis; (R)-mevalonate biosynthesis; (R)-mevalonate from acetyl-CoA: step 3/3. Regulated by a negative feedback mechanism through sterols and non-sterol metabolites derived from mevalonate. Phosphorylation at Ser-872 down-regulates the catalytic activity. Functionally, catalyzes the conversion of (3S)-hydroxy-3-methylglutaryl-CoA (HMG-CoA) to mevalonic acid, the rate-limiting step in the synthesis of cholesterol and other isoprenoids, thus plays a critical role in cellular cholesterol homeostasis. This Oryctolagus cuniculus (Rabbit) protein is 3-hydroxy-3-methylglutaryl-coenzyme A reductase (HMGCR).